The primary structure comprises 198 residues: Transcription factor FapR (198 aa).

Positions threonine 102–serine 167 constitute a MaoC-like domain.

This sequence belongs to the FapR family.

In terms of biological role, transcriptional factor involved in regulation of membrane lipid biosynthesis by repressing genes involved in fatty acid and phospholipid metabolism. This chain is Transcription factor FapR, found in Geobacillus kaustophilus (strain HTA426).